Reading from the N-terminus, the 51-residue chain is Ribosome biogenesis protein Nop10 (51 aa).

Belongs to the NOP10 family.

In terms of biological role, involved in ribosome biogenesis; more specifically in 18S rRNA pseudouridylation and in cleavage of pre-rRNA. This Nitrosopumilus maritimus (strain SCM1) protein is Ribosome biogenesis protein Nop10.